The primary structure comprises 349 residues: Nuclear distribution protein nudE homolog 1 (349 aa).

Residues 23-189 (AMKYKTCSEE…ELAVQQKQEK (167 aa)) are a coiled coil. A disordered region spans residues 182–201 (AVQQKQEKPKSNMGSPETER).

It belongs to the nudE family. In terms of assembly, self-associates. Interacts with pafah1b1. In terms of processing, phosphorylated in mitosis.

The protein resides in the cytoplasm. It localises to the cytoskeleton. It is found in the microtubule organizing center. Its subcellular location is the centrosome. The protein localises to the spindle. The protein resides in the chromosome. It localises to the centromere. It is found in the kinetochore. Its subcellular location is the cleavage furrow. The protein localises to the cytoplasmic vesicle membrane. Required for centrosome duplication and formation and function of the mitotic spindle. This is Nuclear distribution protein nudE homolog 1 (nde1) from Xenopus tropicalis (Western clawed frog).